The chain runs to 161 residues: Nucleotide-binding protein Aave_1854 (161 aa).

Belongs to the YajQ family.

In terms of biological role, nucleotide-binding protein. The protein is Nucleotide-binding protein Aave_1854 of Paracidovorax citrulli (strain AAC00-1) (Acidovorax citrulli).